Here is a 291-residue protein sequence, read N- to C-terminus: HTH-type transcriptional regulator DgcR (291 aa).

The HTH lysR-type domain occupies 1 to 58 (MRLRHIEVFHAIYTTGSITNAAKALHVSQPSVSKVLSHAEMQLGFKLFERVKGRLIPT). The H-T-H motif DNA-binding region spans 18 to 37 (ITNAAKALHVSQPSVSKVLS).

Belongs to the LysR transcriptional regulatory family.

Functionally, transcriptional regulator that positively regulates the expression of the D-Glu gene cluster (DGC). The cluster includes dgcN and dgcA, which are involved in a deamination-independent D-glutamate degradation pathway, dgcR itself, dgcT, dgcP and dgcH. Acts by binding the consensus sequence upstream of dgcR, dgcT, dgcP and dgcH. This chain is HTH-type transcriptional regulator DgcR, found in Pseudoalteromonas sp.